Here is a 303-residue protein sequence, read N- to C-terminus: tRNA dimethylallyltransferase (303 aa).

Residue 10 to 17 participates in ATP binding; it reads GPTASGKS. Residue 12-17 coordinates substrate; that stretch reads TASGKS. An interaction with substrate tRNA region spans residues 35-38; that stretch reads DSMQ.

The protein belongs to the IPP transferase family. Monomer. It depends on Mg(2+) as a cofactor.

The enzyme catalyses adenosine(37) in tRNA + dimethylallyl diphosphate = N(6)-dimethylallyladenosine(37) in tRNA + diphosphate. Functionally, catalyzes the transfer of a dimethylallyl group onto the adenine at position 37 in tRNAs that read codons beginning with uridine, leading to the formation of N6-(dimethylallyl)adenosine (i(6)A). The polypeptide is tRNA dimethylallyltransferase (Methylobacterium nodulans (strain LMG 21967 / CNCM I-2342 / ORS 2060)).